Reading from the N-terminus, the 442-residue chain is Hydrolase phmG (442 aa).

Ser259 acts as the Nucleophile in catalysis.

Belongs to the AB hydrolase superfamily. FUS2 hydrolase family. In terms of assembly, homodimer.

Its pathway is mycotoxin biosynthesis. Hydrolyase; part of the gene cluster that mediates the biosynthesis of the mycotoxins phomacins, leucine-derived cytochalasans with potent actin polymerization-inhibitory activities and monocot-specific antigerminative activities. The first step in the pathway is catalyzed by the hybrid PKS-NRPS phmA, assisted by the enoyl reductase phmE, that are responsible for fusion of the leucine precursor and the polyketide backbone to produce a 2-pyrrolidone intermediate. The polyketide synthase module (PKS) of phmA is responsible for the synthesis of the polyketide backbone and the downstream nonribosomal peptide synthetase (NRPS) amidates the carboxyl end of the polyketide with the leucine precursor. Because phmA lacks a designated enoylreductase (ER) domain, the required activity is provided the enoyl reductase phmE. Reduction by the hydrolyase phmG, followed by dehydration and intra-molecular Diels-Alder cyclization by the Diels-Alderase phmD then yield the required isoindolone-fused macrocycle. A number of oxidative steps catalyzed by the tailoring cytochrome P450 monooxygenase phmB, the FAD-linked oxidoreductase phmC and the short-chain dehydrogenase/reductase phmF, are further required to afford the final products, phomacin D and phomacin E. In Phaeosphaeria nodorum (strain SN15 / ATCC MYA-4574 / FGSC 10173) (Glume blotch fungus), this protein is Hydrolase phmG.